We begin with the raw amino-acid sequence, 686 residues long: ATP-dependent zinc metalloprotease FTSH 6, chloroplastic (686 aa).

Positions 1–14 (MSPTAMSLTTTTSR) are enriched in polar residues. The disordered stretch occupies residues 1–52 (MSPTAMSLTTTTSRLPICRAQGGGVAKEKRTTPPPAKITPPSSSSSEAAGLS). Residues 1 to 75 (MSPTAMSLTT…LGLTAARPAR (75 aa)) constitute a chloroplast transit peptide. Residues 39–52 (TPPSSSSSEAAGLS) are compositionally biased toward low complexity. Residues 164-184 (VMLLDLLVNFGFPLLFVASLL) traverse the membrane as a helical segment. Position 261-268 (261-268 (GPPGTGKT)) interacts with ATP. Zn(2+) is bound at residue His483. Glu484 is an active-site residue. Zn(2+) contacts are provided by His487 and Asp562.

This sequence in the N-terminal section; belongs to the AAA ATPase family. In the C-terminal section; belongs to the peptidase M41 family. The cofactor is Zn(2+).

Its subcellular location is the plastid. The protein resides in the chloroplast thylakoid membrane. Probable ATP-dependent zinc metallopeptidase. The protein is ATP-dependent zinc metalloprotease FTSH 6, chloroplastic (FTSH6) of Oryza sativa subsp. japonica (Rice).